Consider the following 370-residue polypeptide: MNEMTHRTKTRPVKVGNLTIGGNNELIIQSMTTTKTHDVEATVAEIKRLEEAGCQVVRVAVPDERAADAIADIKKQINIPLVADIHFDYRLALKAIEGGIDKVRINPGNIGRRHKVEAVVNAAKERGIPIRIGVNAGSLERHILEKYGYPTADGMVESALHHIKILEDLDFHDIIVSMKASDVNLAIEAYEKAARAFDYPLHLGITESGTLFAGTVKSAAGLGAILSKGIGNTLRISLSADPVEEVKVARELLKSFGLASNAATLISCPTCGRIEIDLISIANEVEEYISTLQVPIKVAVLGCAVNGPGEAREADIGIAGARGEGLLFRKGQVVRKVPEETMVEELKKEIDVIAAEMAAEREKEKETQEQ.

[4Fe-4S] cluster contacts are provided by C268, C271, C303, and E310.

The protein belongs to the IspG family. [4Fe-4S] cluster is required as a cofactor.

It catalyses the reaction (2E)-4-hydroxy-3-methylbut-2-enyl diphosphate + oxidized [flavodoxin] + H2O + 2 H(+) = 2-C-methyl-D-erythritol 2,4-cyclic diphosphate + reduced [flavodoxin]. Its pathway is isoprenoid biosynthesis; isopentenyl diphosphate biosynthesis via DXP pathway; isopentenyl diphosphate from 1-deoxy-D-xylulose 5-phosphate: step 5/6. In terms of biological role, converts 2C-methyl-D-erythritol 2,4-cyclodiphosphate (ME-2,4cPP) into 1-hydroxy-2-methyl-2-(E)-butenyl 4-diphosphate. The protein is 4-hydroxy-3-methylbut-2-en-1-yl diphosphate synthase (flavodoxin) of Bacillus cereus (strain G9842).